A 352-amino-acid polypeptide reads, in one-letter code: uncharacterized protein (352 aa).

This is an uncharacterized protein from Acanthamoeba polyphaga mimivirus (APMV).